Here is a 411-residue protein sequence, read N- to C-terminus: Anthranilate synthase component 1 (411 aa).

L-tryptophan-binding positions include Ser-27 and 203–205 (PYM). 237-238 (GT) serves as a coordination point for chorismate. Mg(2+) is bound at residue Glu-262. Chorismate contacts are provided by residues Tyr-350, Arg-369, 382 to 384 (GAG), and Gly-384. Glu-397 is a Mg(2+) binding site.

This sequence belongs to the anthranilate synthase component I family. In terms of assembly, heterotetramer consisting of two non-identical subunits: a beta subunit (TrpG) and a large alpha subunit (TrpE). Mg(2+) is required as a cofactor.

It catalyses the reaction chorismate + L-glutamine = anthranilate + pyruvate + L-glutamate + H(+). It functions in the pathway amino-acid biosynthesis; L-tryptophan biosynthesis; L-tryptophan from chorismate: step 1/5. Feedback inhibited by tryptophan. Functionally, part of a heterotetrameric complex that catalyzes the two-step biosynthesis of anthranilate, an intermediate in the biosynthesis of L-tryptophan. In the first step, the glutamine-binding beta subunit (TrpG) of anthranilate synthase (AS) provides the glutamine amidotransferase activity which generates ammonia as a substrate that, along with chorismate, is used in the second step, catalyzed by the large alpha subunit of AS (TrpE) to produce anthranilate. In the absence of TrpG, TrpE can synthesize anthranilate directly from chorismate and high concentrations of ammonia. The protein is Anthranilate synthase component 1 (trpE) of Archaeoglobus fulgidus (strain ATCC 49558 / DSM 4304 / JCM 9628 / NBRC 100126 / VC-16).